The chain runs to 307 residues: MAKISVIGAGNVGATTVQRLAELEPGEIVMTDIVEGLPQGKALDLMQAGAINGYDTQVTGTNDYADITDSDLVIITAGIARKPGMTREDLMKTNSKIIGEVSRNIAEYAPNSIVINVTNPLDVITYVAMKTTGFETKKVFGMSGVLDAGRFASFIAEELNCSKKDIEAMVIGGHGDLMVPLPQYTTVSGIPLPELLPEETIARLVERTVNGGAEIVGLLKQGSAFYAPSAAIVSVAEAVLKDSKRILPTSAYLEGQYGQEGIYFGVLAKLGANGVEEVLELKLEENQYEILRKSSETIKRGISKLGI.

NAD(+) contacts are provided by residues 8 to 13 (GAGNVG) and D32. Positions 81 and 87 each coordinate substrate. Residues N94 and 117–119 (VTN) each bind NAD(+). 2 residues coordinate substrate: N119 and R150. H174 acts as the Proton acceptor in catalysis.

Belongs to the LDH/MDH superfamily.

It catalyses the reaction (S)-malate + NAD(+) = oxaloacetate + NADH + H(+). Its function is as follows. Catalyzes the reversible oxidation of malate to oxaloacetate. The sequence is that of Malate dehydrogenase (mdh) from Methanosarcina acetivorans (strain ATCC 35395 / DSM 2834 / JCM 12185 / C2A).